The chain runs to 577 residues: Suppressor of tumorigenicity 7 protein (577 aa).

Residues 15–35 (CIVWSWTYLWTVWFFLVLFLV) form a helical membrane-spanning segment. Residue N47 is glycosylated (N-linked (GlcNAc...) asparagine). A helical transmembrane segment spans residues 62-82 (FYVALTGTSSLISGLILIFEW). The residue at position 386 (S386) is a Phosphoserine. Transmembrane regions (helical) follow at residues 512-532 (LPFFILFTAGLCSFTAMLALL) and 539-559 (LMGVFAKAFLSTLFAPLNFVM).

Belongs to the ST7 family.

Its subcellular location is the membrane. This Rattus norvegicus (Rat) protein is Suppressor of tumorigenicity 7 protein (St7).